A 211-amino-acid chain; its full sequence is Thymidylate kinase (211 aa).

ATP is bound at residue 7–14 (GMDGSGKT).

The protein belongs to the thymidylate kinase family.

The enzyme catalyses dTMP + ATP = dTDP + ADP. Phosphorylation of dTMP to form dTDP in both de novo and salvage pathways of dTTP synthesis. In Mesoplasma florum (strain ATCC 33453 / NBRC 100688 / NCTC 11704 / L1) (Acholeplasma florum), this protein is Thymidylate kinase.